An 89-amino-acid chain; its full sequence is UPF0147 protein Saci_0891 (89 aa).

The protein belongs to the UPF0147 family.

The polypeptide is UPF0147 protein Saci_0891 (Sulfolobus acidocaldarius (strain ATCC 33909 / DSM 639 / JCM 8929 / NBRC 15157 / NCIMB 11770)).